The sequence spans 219 residues: Octanoyltransferase (219 aa).

Positions 32–207 (SSSPDQLWIV…TFSHNLGYQN (176 aa)) constitute a BPL/LPL catalytic domain. Residues 71-78 (RGGQVTYH), 138-140 (SLG), and 151-153 (GLA) each bind substrate. The Acyl-thioester intermediate role is filled by Cys-169.

Belongs to the LipB family.

The protein localises to the cytoplasm. The catalysed reaction is octanoyl-[ACP] + L-lysyl-[protein] = N(6)-octanoyl-L-lysyl-[protein] + holo-[ACP] + H(+). Its pathway is protein modification; protein lipoylation via endogenous pathway; protein N(6)-(lipoyl)lysine from octanoyl-[acyl-carrier-protein]: step 1/2. Functionally, catalyzes the transfer of endogenously produced octanoic acid from octanoyl-acyl-carrier-protein onto the lipoyl domains of lipoate-dependent enzymes. Lipoyl-ACP can also act as a substrate although octanoyl-ACP is likely to be the physiological substrate. The chain is Octanoyltransferase from Shewanella woodyi (strain ATCC 51908 / MS32).